Consider the following 225-residue polypeptide: Insulin-induced gene 2 protein (225 aa).

Topologically, residues 1-28 (MAEGETESPRPKKRGPYISSVTSQSVNV) are cytoplasmic. A helical membrane pass occupies residues 29–51 (VIRGVVLFFIGVFLALVLNLLQI). The Lumenal portion of the chain corresponds to 52–70 (QRNVTLFPPDVITSIFSSA). A helical transmembrane segment spans residues 71–88 (WWVPPCCGTASAVIGLLY). Topologically, residues 89-103 (PCIDRHLGEPHKFKR) are cytoplasmic. A helical transmembrane segment spans residues 104–126 (EWSSVMRCVAVFVGINHASAKVD). The Lumenal portion of the chain corresponds to 127 to 129 (FDN). The chain crosses the membrane as a helical span at residues 130 to 148 (NFQFSLTLAALSVGLWWTF). Topologically, residues 149 to 153 (DRSRS) are cytoplasmic. Residue S151 is modified to Phosphoserine. A helical membrane pass occupies residues 154-175 (GFGLGVGIAFLATVVTQLLVYN). At 176–189 (GVYQYTSPDFLYVR) the chain is on the lumenal side. The helical transmembrane segment at 190 to 207 (SWLPCIFFAGGITMGNIG) threads the bilayer. Residues 208–225 (RQLAMYECKVIAEKSHQE) lie on the Cytoplasmic side of the membrane. C215 is subject to Cysteine sulfenic acid (-SOH); alternate. Residue C215 forms a Glycyl cysteine thioester (Cys-Gly) (interchain with G-Cter in ubiquitin); alternate linkage. A KxHxx motif is present at residues 219 to 225 (AEKSHQE).

This sequence belongs to the INSIG family. In terms of assembly, interacts with SCAP; interaction is direct and only takes place in the presence of sterols; it prevents interaction between SCAP and the coat protein complex II (COPII). Associates with the SCAP-SREBP complex (composed of SCAP and SREBF1/SREBP1 or SREBF2/SREBP2); association is mediated via its interaction with SCAP and only takes place in the presence of sterols. Interacts with RNF139. Interacts with RNF145. Post-translationally, phosphorylation at Ser-151 by PCK1 reduces binding to oxysterol, disrupting the interaction between INSIG2 and SCAP, thereby promoting nuclear translocation of SREBP proteins (SREBF1/SREBP1 or SREBF2/SREBP2) and subsequent transcription of downstream lipogenesis-related genes. In terms of processing, polyubiquitinated by AMFR/gp78 at Cys-215 in some tissues such as adipose tissues, undifferentiated myoblasts and liver, leading to its degradation. In differentiated myotubes, Cys-215 oxidation prevents ubiquitination at the same site, resulting in protein stabilization. Oxidized at Cys-215 in differentiated myotubes, preventing ubiquitination at the same site, and resulting in protein stabilization.

The protein localises to the endoplasmic reticulum membrane. In terms of biological role, oxysterol-binding protein that mediates feedback control of cholesterol synthesis by controlling both endoplasmic reticulum to Golgi transport of SCAP and degradation of HMGCR. Acts as a negative regulator of cholesterol biosynthesis by mediating the retention of the SCAP-SREBP complex in the endoplasmic reticulum, thereby blocking the processing of sterol regulatory element-binding proteins (SREBPs) SREBF1/SREBP1 and SREBF2/SREBP2. Binds oxysterol, including 22-hydroxycholesterol, 24-hydroxycholesterol, 25-hydroxycholesterol and 27-hydroxycholesterol, regulating interaction with SCAP and retention of the SCAP-SREBP complex in the endoplasmic reticulum. In presence of oxysterol, interacts with SCAP, retaining the SCAP-SREBP complex in the endoplasmic reticulum, thereby preventing SCAP from escorting SREBF1/SREBP1 and SREBF2/SREBP2 to the Golgi. Sterol deprivation or phosphorylation by PCK1 reduce oxysterol-binding, disrupting the interaction between INSIG2 and SCAP, thereby promoting Golgi transport of the SCAP-SREBP complex, followed by processing and nuclear translocation of SREBF1/SREBP1 and SREBF2/SREBP2. Also regulates cholesterol synthesis by regulating degradation of HMGCR: initiates the sterol-mediated ubiquitin-mediated endoplasmic reticulum-associated degradation (ERAD) of HMGCR via recruitment of the reductase to the ubiquitin ligase RNF139. In Rattus norvegicus (Rat), this protein is Insulin-induced gene 2 protein.